The primary structure comprises 317 residues: Melanocyte-stimulating hormone receptor (317 aa).

Residues 1-37 lie on the Extracellular side of the membrane; the sequence is MPVLGSQRRLLGSLNCTPPATFPLTLAPNRTGPQCLE. Residue Asn29 is glycosylated (N-linked (GlcNAc...) asparagine). A helical membrane pass occupies residues 38-63; that stretch reads VSIPDGLFLSLGLVSLVENVLVVAAI. Over 64–72 the chain is Cytoplasmic; it reads AKNRNLHSP. The chain crosses the membrane as a helical span at residues 73-93; that stretch reads MYYFICCLAMSDLLVSVSNVL. The Extracellular portion of the chain corresponds to 94–118; sequence ETAVMLLLEAGALAAQAAVVQQLDN. Residues 119-140 traverse the membrane as a helical segment; the sequence is VIDVLICGSMVSSLCFLGAIAV. Over 141–163 the chain is Cytoplasmic; it reads DRYISIFYALRYHSVVTLPRAWR. A helical transmembrane segment spans residues 164 to 183; that stretch reads IIAAIWVASILTSLLFITYY. The Extracellular segment spans residues 184-191; it reads NHTVVLLC. The chain crosses the membrane as a helical span at residues 192–211; it reads LVGFFIAMLALMAVLYVHML. Over 212–240 the chain is Cytoplasmic; the sequence is ARACQHARGIARLQKRQRPIHQGFGLKGA. Residues 241-266 traverse the membrane as a helical segment; that stretch reads ATLTILLGVFFLCWGPFFLHLSLIVL. At 267 to 279 the chain is on the extracellular side; the sequence is CPQHPTCGCIFKN. The helical transmembrane segment at 280–300 threads the bilayer; it reads FNLFLALIICNAIVDPLIYAF. The Cytoplasmic segment spans residues 301–317; it reads RSQELRKTLQEVLQCSW. Residue Cys315 is the site of S-palmitoyl cysteine attachment.

It belongs to the G-protein coupled receptor 1 family. Interacts with MGRN1, but does not undergo MGRN1-mediated ubiquitination; this interaction competes with GNAS-binding and thus inhibits agonist-induced cAMP production. Interacts with OPN3; the interaction results in a decrease in MC1R-mediated cAMP signaling and ultimately a decrease in melanin production in melanocytes.

It localises to the cell membrane. Functionally, receptor for MSH (alpha, beta and gamma) and ACTH. The activity of this receptor is mediated by G proteins which activate adenylate cyclase. Mediates melanogenesis, the production of eumelanin (black/brown) and phaeomelanin (red/yellow), via regulation of cAMP signaling in melanocytes. The protein is Melanocyte-stimulating hormone receptor (MC1R) of Dama dama (Fallow deer).